The chain runs to 330 residues: Aspartate--ammonia ligase (330 aa).

The protein belongs to the class-II aminoacyl-tRNA synthetase family. AsnA subfamily.

The protein resides in the cytoplasm. It carries out the reaction L-aspartate + NH4(+) + ATP = L-asparagine + AMP + diphosphate + H(+). Its pathway is amino-acid biosynthesis; L-asparagine biosynthesis; L-asparagine from L-aspartate (ammonia route): step 1/1. This Klebsiella pneumoniae (strain 342) protein is Aspartate--ammonia ligase.